Here is a 113-residue protein sequence, read N- to C-terminus: Hydrogenase maturation factor HybF (113 aa).

Ni(2+) is bound by residues histidine 2 and glutamate 3. Residues cysteine 73, cysteine 76, cysteine 89, and cysteine 92 each contribute to the Zn(2+) site.

This sequence belongs to the HypA/HybF family. HybF subfamily.

Its function is as follows. Involved in the maturation of [NiFe] hydrogenases. Required for nickel insertion into the metal center of the hydrogenase. The chain is Hydrogenase maturation factor HybF from Salmonella typhi.